Reading from the N-terminus, the 242-residue chain is Probable 2-phosphosulfolactate phosphatase (242 aa).

This sequence belongs to the ComB family. The cofactor is Mg(2+).

It carries out the reaction (2R)-O-phospho-3-sulfolactate + H2O = (2R)-3-sulfolactate + phosphate. The polypeptide is Probable 2-phosphosulfolactate phosphatase (Picosynechococcus sp. (strain ATCC 27264 / PCC 7002 / PR-6) (Agmenellum quadruplicatum)).